Consider the following 165-residue polypeptide: MAESFSFDVVSDFDRQELVNTLDQVKREISQRYDLKGTETSVDLDKENIFIITNSELTLNSVNDIIRQKAIKRNLSLKIFDYGEIEMVSGNRVKQTILLKQGIKQDIAKKISKNIRDQIKKINVSINGDTLRVASKSKNDLQFAIKLVSELEESLNIPLKANNFR.

Belongs to the YajQ family.

In terms of biological role, nucleotide-binding protein. This is Nucleotide-binding protein P9215_05621 from Prochlorococcus marinus (strain MIT 9215).